A 620-amino-acid chain; its full sequence is Membrane protein insertase YidC (620 aa).

The next 6 membrane-spanning stretches (helical) occupy residues 5–25 (QIIG…FMST), 343–363 (LGWP…FDGL), 366–386 (VFSS…LVLL), 436–456 (LSGC…FNFF), 482–502 (LPFT…LMTI), and 529–549 (PVVF…YYFV).

Belongs to the OXA1/ALB3/YidC family. Type 1 subfamily. In terms of assembly, interacts with the Sec translocase complex via SecD. Specifically interacts with transmembrane segments of nascent integral membrane proteins during membrane integration.

It is found in the cell inner membrane. Required for the insertion and/or proper folding and/or complex formation of integral membrane proteins into the membrane. Involved in integration of membrane proteins that insert both dependently and independently of the Sec translocase complex, as well as at least some lipoproteins. Aids folding of multispanning membrane proteins. The sequence is that of Membrane protein insertase YidC from Cytophaga hutchinsonii (strain ATCC 33406 / DSM 1761 / CIP 103989 / NBRC 15051 / NCIMB 9469 / D465).